The following is a 572-amino-acid chain: Ribonuclease Y (572 aa).

Residues 1 to 21 (MPTLYVILSLLLGLIGGVLVQ) traverse the membrane as a helical segment. Disordered regions lie at residues 59 to 85 (HEAA…DAAE) and 110 to 142 (QLEA…ERED). Basic and acidic residues-rich tracts occupy residues 110–119 (QLEAEREQAK) and 129–142 (LSTD…ERED). The KH domain occupies 262 to 322 (SVSVVPIPSD…LRREVARHVL (61 aa)). The 94-residue stretch at 388–481 (VLKHSVQVAH…VAAADAISAA (94 aa)) folds into the HD domain.

The protein belongs to the RNase Y family.

The protein localises to the cell membrane. Its function is as follows. Endoribonuclease that initiates mRNA decay. This Deinococcus radiodurans (strain ATCC 13939 / DSM 20539 / JCM 16871 / CCUG 27074 / LMG 4051 / NBRC 15346 / NCIMB 9279 / VKM B-1422 / R1) protein is Ribonuclease Y.